We begin with the raw amino-acid sequence, 430 residues long: Transcription factor PIF4 (430 aa).

5 disordered regions span residues 42-71 (QTHREQTQTQKQDHHEEALRSSTFLEDQET), 97-136 (MDPLQRPTSETVKPKSSPEPPQVMVKPKACPDPPPQVMPP), 160-183 (TVGPSHCGSNPSQNDLDVSMSHDR), 223-266 (DRKR…NLSE), and 405-430 (SSPAGQQSQQPSSVPTKTTDGSRLDH). A compositionally biased stretch (basic and acidic residues) spans 43–60 (THREQTQTQKQDHHEEAL). Polar residues predominate over residues 61–71 (RSSTFLEDQET). Over residues 126–136 (CPDPPPQVMPP) the composition is skewed to pro residues. Polar residues predominate over residues 160-175 (TVGPSHCGSNPSQNDL). Residues 244–253 (NKSNQRSGSN) are compositionally biased toward low complexity. Residues 257-266 (RAAEVHNLSE) show a composition bias toward basic and acidic residues. One can recognise a bHLH domain in the interval 257–306 (RAAEVHNLSERRRRDRINERMKALQELIPHCSKTDKASILDEAIDYLKSL). The segment covering 405–419 (SSPAGQQSQQPSSVP) has biased composition (low complexity).

This sequence belongs to the bHLH protein family. As to quaternary structure, interacts preferentially with the Pfr form of phytochrome B (phyB). Binds DNA as a homodimer, but once bound to DNA, loses its capacity to interact with phyB. Interacts with APRR1/TOC1 and PIF3. Binds to RGL2 and RGA. Forms non-functional heterodimer with HFR1. Interacts with PHYB, CRY1 and CRY2 in the nucleus in response to low blue light (LBL). Interacts with FYPP1 and FYPP3. Associates to PTAC12/HMR/PAP5, which acts as a transcriptional coactivator to trigger the thermoresponsive growth-relevant genes and promote warm-temperature-dependent PIF4 accumulation. Interacts with MED14. As to expression, mainly expressed in leaves, stems and seedlings, and, to a lower extent, in fruits, flowers and roots.

The protein localises to the nucleus. Functionally, transcription factor acting negatively in the phytochrome B signaling pathway. May regulate the expression of a subset of genes involved in cell expansion by binding to the G-box motif. Activated by CRY1 and CRY2 in response to low blue light (LBL) by direct binding at chromatin on E-box variant 5'-CA[CT]GTG-3' to stimulate specific gene expression to adapt global physiology (e.g. hypocotyl elongation in low blue light). Element of a PIF4/HMR/MED14-dependent thermoresponsive process; collaboratively with its transcriptional coactivator PTAC12/HMR/PAP5, involved in the regulation of thermoresponsive growth-relevant genes (e.g. mainly involved in biosynthesis and signaling of the phytohormone auxin) leading to daytime warm temperature elicitation of MED14-dependent thermomorphogenesis (e.g. hypocotyl elongation). This chain is Transcription factor PIF4, found in Arabidopsis thaliana (Mouse-ear cress).